The sequence spans 267 residues: 4-hydroxy-tetrahydrodipicolinate reductase (267 aa).

NAD(+) contacts are provided by residues 9-14 (GAGGRM) and aspartate 35. An NADP(+)-binding site is contributed by arginine 36. Residues 99-101 (GTT) and 123-126 (AANY) each bind NAD(+). The Proton donor/acceptor role is filled by histidine 156. Residue histidine 157 participates in (S)-2,3,4,5-tetrahydrodipicolinate binding. Lysine 160 (proton donor) is an active-site residue. 166–167 (GT) lines the (S)-2,3,4,5-tetrahydrodipicolinate pocket.

It belongs to the DapB family.

The protein localises to the cytoplasm. The enzyme catalyses (S)-2,3,4,5-tetrahydrodipicolinate + NAD(+) + H2O = (2S,4S)-4-hydroxy-2,3,4,5-tetrahydrodipicolinate + NADH + H(+). It carries out the reaction (S)-2,3,4,5-tetrahydrodipicolinate + NADP(+) + H2O = (2S,4S)-4-hydroxy-2,3,4,5-tetrahydrodipicolinate + NADPH + H(+). The protein operates within amino-acid biosynthesis; L-lysine biosynthesis via DAP pathway; (S)-tetrahydrodipicolinate from L-aspartate: step 4/4. In terms of biological role, catalyzes the conversion of 4-hydroxy-tetrahydrodipicolinate (HTPA) to tetrahydrodipicolinate. In Halorhodospira halophila (strain DSM 244 / SL1) (Ectothiorhodospira halophila (strain DSM 244 / SL1)), this protein is 4-hydroxy-tetrahydrodipicolinate reductase.